The primary structure comprises 945 residues: Translation initiation factor IF-2 (945 aa).

Disordered regions lie at residues 52–80 (RSHG…DSSG) and 96–357 (MKRD…FQAP). Over residues 153-175 (PEPEPIVEPEPEPEPEPEPEPQP) the composition is skewed to acidic residues. Basic and acidic residues-rich tracts occupy residues 215-283 (DEER…KEAA) and 294-310 (AKTE…RTAR). In terms of domain architecture, tr-type G spans 445–614 (PRAPVVTVMG…LLQAEVLELT (170 aa)). The G1 stretch occupies residues 454–461 (GHVDHGKT). 454 to 461 (GHVDHGKT) is a GTP binding site. A G2 region spans residues 479–483 (GITQH). A G3 region spans residues 500 to 503 (DTPG). GTP contacts are provided by residues 500-504 (DTPGH) and 554-557 (NKID). Positions 554 to 557 (NKID) are G4. The interval 590–592 (SAK) is G5.

This sequence belongs to the TRAFAC class translation factor GTPase superfamily. Classic translation factor GTPase family. IF-2 subfamily.

It is found in the cytoplasm. In terms of biological role, one of the essential components for the initiation of protein synthesis. Protects formylmethionyl-tRNA from spontaneous hydrolysis and promotes its binding to the 30S ribosomal subunits. Also involved in the hydrolysis of GTP during the formation of the 70S ribosomal complex. The polypeptide is Translation initiation factor IF-2 (Aromatoleum aromaticum (strain DSM 19018 / LMG 30748 / EbN1) (Azoarcus sp. (strain EbN1))).